We begin with the raw amino-acid sequence, 327 residues long: Phosphate acyltransferase (327 aa).

This sequence belongs to the PlsX family. In terms of assembly, homodimer. Probably interacts with PlsY.

Its subcellular location is the cytoplasm. It catalyses the reaction a fatty acyl-[ACP] + phosphate = an acyl phosphate + holo-[ACP]. Its pathway is lipid metabolism; phospholipid metabolism. Its function is as follows. Catalyzes the reversible formation of acyl-phosphate (acyl-PO(4)) from acyl-[acyl-carrier-protein] (acyl-ACP). This enzyme utilizes acyl-ACP as fatty acyl donor, but not acyl-CoA. The chain is Phosphate acyltransferase from Mycoplasma mobile (strain ATCC 43663 / 163K / NCTC 11711) (Mesomycoplasma mobile).